A 293-amino-acid polypeptide reads, in one-letter code: 4-hydroxy-tetrahydrodipicolinate synthase (293 aa).

Residue T45 coordinates pyruvate. The active-site Proton donor/acceptor is Y133. K161 serves as the catalytic Schiff-base intermediate with substrate. I204 is a binding site for pyruvate.

This sequence belongs to the DapA family. In terms of assembly, homotetramer; dimer of dimers.

Its subcellular location is the cytoplasm. The catalysed reaction is L-aspartate 4-semialdehyde + pyruvate = (2S,4S)-4-hydroxy-2,3,4,5-tetrahydrodipicolinate + H2O + H(+). Its pathway is amino-acid biosynthesis; L-lysine biosynthesis via DAP pathway; (S)-tetrahydrodipicolinate from L-aspartate: step 3/4. Functionally, catalyzes the condensation of (S)-aspartate-beta-semialdehyde [(S)-ASA] and pyruvate to 4-hydroxy-tetrahydrodipicolinate (HTPA). This Yersinia pseudotuberculosis serotype O:1b (strain IP 31758) protein is 4-hydroxy-tetrahydrodipicolinate synthase.